The chain runs to 447 residues: Protein king tubby (447 aa).

The tract at residues 54 to 84 (GSPQNPDQILSNNSSSITMNSSRNNSNNMRS) is disordered. A compositionally biased stretch (low complexity) spans 62–84 (ILSNNSSSITMNSSRNNSNNMRS). The residue at position 136 (S136) is a Phosphoserine. Over residues 168-182 (EGAAMEGSNGAANGS) the composition is skewed to low complexity. A disordered region spans residues 168–191 (EGAAMEGSNGAANGSGSVGGSGES).

The protein belongs to the TUB family.

It localises to the cytoplasm. The protein localises to the nucleus. It is found in the cell projection. The protein resides in the cilium membrane. Its subcellular location is the rhabdomere. This Drosophila grimshawi (Hawaiian fruit fly) protein is Protein king tubby.